Consider the following 350-residue polypeptide: 3-isopropylmalate dehydrogenase (350 aa).

76–87 is an NAD(+) binding site; that stretch reads GPKWDNAPKRPE. Substrate is bound by residues Arg-94, Arg-104, Arg-132, and Asp-217. 3 residues coordinate Mg(2+): Asp-217, Asp-241, and Asp-245. 275–287 serves as a coordination point for NAD(+); sequence GSAPDIANQNIAN.

This sequence belongs to the isocitrate and isopropylmalate dehydrogenases family. LeuB type 1 subfamily. Homodimer. The cofactor is Mg(2+). Mn(2+) serves as cofactor.

Its subcellular location is the cytoplasm. The enzyme catalyses (2R,3S)-3-isopropylmalate + NAD(+) = 4-methyl-2-oxopentanoate + CO2 + NADH. It participates in amino-acid biosynthesis; L-leucine biosynthesis; L-leucine from 3-methyl-2-oxobutanoate: step 3/4. Catalyzes the oxidation of 3-carboxy-2-hydroxy-4-methylpentanoate (3-isopropylmalate) to 3-carboxy-4-methyl-2-oxopentanoate. The product decarboxylates to 4-methyl-2 oxopentanoate. The protein is 3-isopropylmalate dehydrogenase of Listeria monocytogenes serotype 4b (strain F2365).